A 449-amino-acid polypeptide reads, in one-letter code: G-protein coupled receptor 61 (449 aa).

A compositionally biased stretch (low complexity) spans 1-14 (MESSPIPQSSGNSS). A disordered region spans residues 1-29 (MESSPIPQSSGNSSTLGRALQTPGPSTAS). Topologically, residues 1–44 (MESSPIPQSSGNSSTLGRALQTPGPSTASGVPELGLRDVASESV) are extracellular. A glycan (N-linked (GlcNAc...) asparagine) is linked at Asn12. The helical transmembrane segment at 45–67 (ALFFMLLLDLTAVAGNAAVMAVI) threads the bilayer. The Cytoplasmic segment spans residues 68 to 75 (AKTPALRK). The helical transmembrane segment at 76 to 98 (FVFVFHLCLVDLLAALTLMPLAM) threads the bilayer. The Extracellular segment spans residues 99 to 112 (LSSSALFDHALFGE). Residues 113 to 135 (VACRLYLFLSVCFVSLAILSVSA) form a helical membrane-spanning segment. At 136–155 (INVERYYYVVHPMRYEVRMT) the chain is on the cytoplasmic side. Residues 156 to 178 (LGLVASVLVGVWVKALAMASVPV) form a helical membrane-spanning segment. Residues 179-206 (LGRVYWEEGAPSVNPGCSLQWSHSAYCQ) lie on the Extracellular side of the membrane. A helical membrane pass occupies residues 207–229 (LFVVVFAVLYFLLPLILIFVVYC). At 230–287 (SMFRVARVAAMQHGPLPTWMETPRQRSESLSSRSTMVTSSGAHQTTPHRTFGGGKAAV) the chain is on the cytoplasmic side. Residues 288–310 (VLLAVGGQFLLCWLPYFSFHLYV) traverse the membrane as a helical segment. At 311–324 (ALSAQPISAGQVEN) the chain is on the extracellular side. A helical membrane pass occupies residues 325-344 (VVTWIGYFCFTSNPFFYGCL). Residues 345–449 (NRQIRGELSK…RPAPSPRLES (105 aa)) are Cytoplasmic-facing.

The protein belongs to the G-protein coupled receptor 1 family. In terms of assembly, forms heterodimer with MTNR1B. Interacts with ARRB1 and ARRB2 in a spontaneous and agonist-independent manner; leading to the internalization of GPR61 in the endosomal compartment. Predominantly expressed in the brain and testes, with relatively lower expression observed in the eye, adrenal gland and pituitary gland.

Its subcellular location is the cell membrane. It is found in the endosome membrane. In terms of biological role, orphan G-protein coupled receptor. Constitutively activates the G(s)-alpha/cAMP signaling pathway. Shows a reciprocal regulatory interaction with the melatonin receptor MTNR1B most likely through receptor heteromerization. May be involved in the regulation of food intake and body weight. The protein is G-protein coupled receptor 61 (Gpr61) of Mus musculus (Mouse).